A 56-amino-acid polypeptide reads, in one-letter code: Repressor-like protein SSo7c4 (56 aa).

Residues glutamate 4–serine 51 form the SpoVT-AbrB domain.

The protein is Repressor-like protein SSo7c4 of Saccharolobus solfataricus (strain ATCC 35092 / DSM 1617 / JCM 11322 / P2) (Sulfolobus solfataricus).